A 407-amino-acid polypeptide reads, in one-letter code: Phosphonoacetate hydrolase (407 aa).

Residues Asp-25, Thr-64, Asp-202, His-206, Asp-241, His-242, and His-368 each coordinate Zn(2+). Substrate is bound by residues Thr-64 and Asp-202. The substrate site is built by His-242 and His-368.

The protein belongs to the alkaline phosphatase family. PhnA subfamily. As to quaternary structure, homodimer. The cofactor is Zn(2+).

It catalyses the reaction phosphonoacetate + H2O = acetate + phosphate + H(+). Its activity is regulated as follows. Completely inhibited by EDTA and 1,10-phenanthroline. Moderately inhibited by the phosphonocarboxylic acids phosphonoformate and 3-phosphonopropionate and the phosphonate herbicide glyphosate. Partially inhibited by the reducing agents sodium sulfide and dithiotheitol and the chelating agent iminodiacetate. Nonphosphonate analogs of phosphonoacetate, such as arsonoacetate, sulfonoacetate and malonate are poor inhibitors. Inorganic phosphate, acetate and the known phosphonotase inhibitor phosphite have little effect on activity. Not inhibited by the alkylphosphonic acids methylphosphonate and ethylphosphonate, or the aminoalkylphosphonates 2-aminoethylphosphonate, 3-aminopropylphosphonate and 4-aminobutylphosphonate. Fe(3+), Ca(2+), Mg(2+) and Cs(+) have no effect on activity. Activity is slightly increased by the aminoalkylphosphonates 1-aminoethylphosphonate, 1-aminobutylphosphonate, 2-amino-4-butylphosphonate. Activity is increased by Zn(2+), Mn(2+) and Co(2+), these 3 metal ions also allow recovery of activity after EDTA treatment. Its function is as follows. Specifically hydrolyzes phosphonoacetate. Does not have activity on other organophosphonates or acetates. The polypeptide is Phosphonoacetate hydrolase (Pseudomonas fluorescens).